The sequence spans 74 residues: Sec-independent protein translocase protein TatA (74 aa).

The helical transmembrane segment at M1 to G21 threads the bilayer. The tract at residues A51–A74 is disordered.

It belongs to the TatA/E family. The Tat system comprises two distinct complexes: a TatABC complex, containing multiple copies of TatA, TatB and TatC subunits, and a separate TatA complex, containing only TatA subunits. Substrates initially bind to the TatABC complex, which probably triggers association of the separate TatA complex to form the active translocon.

Its subcellular location is the cell inner membrane. Its function is as follows. Part of the twin-arginine translocation (Tat) system that transports large folded proteins containing a characteristic twin-arginine motif in their signal peptide across membranes. TatA could form the protein-conducting channel of the Tat system. The polypeptide is Sec-independent protein translocase protein TatA (Glaesserella parasuis serovar 5 (strain SH0165) (Haemophilus parasuis)).